The chain runs to 150 residues: Protein-export protein SecB (150 aa).

The protein belongs to the SecB family. As to quaternary structure, homotetramer, a dimer of dimers. One homotetramer interacts with 1 SecA dimer.

It localises to the cytoplasm. Its function is as follows. One of the proteins required for the normal export of preproteins out of the cell cytoplasm. It is a molecular chaperone that binds to a subset of precursor proteins, maintaining them in a translocation-competent state. It also specifically binds to its receptor SecA. The sequence is that of Protein-export protein SecB from Psychrobacter cryohalolentis (strain ATCC BAA-1226 / DSM 17306 / VKM B-2378 / K5).